Here is an 896-residue protein sequence, read N- to C-terminus: Desmocollin-3 (896 aa).

A signal peptide spans 1–26 (MAAPGSGAPCAELCRQLLLTLVVFSF). The propeptide occupies 27-134 (ACEACKKEIF…KETVLRRSKR (108 aa)). Cadherin domains are found at residues 135–242 (RWAP…HPIF), 243–354 (TEAV…LPTF), 355–471 (RQNA…GPEC), 472–579 (SPEV…EILQ), and 580–690 (DYLV…ILGK). Topologically, residues 135–690 (RWAPIPCSMQ…RRSADVILGK (556 aa)) are extracellular. Asn-165 is a glycosylation site (N-linked (GlcNAc...) asparagine). 3 N-linked (GlcNAc...) asparagine glycosylation sites follow: Asn-391, Asn-546, and Asn-629. A helical transmembrane segment spans residues 691–711 (WAILAILLGIALLFSILLTLV). Residues 712–896 (CGIVSARNKK…AALAKTCTKR (185 aa)) lie on the Cytoplasmic side of the membrane.

May form homodimers. Interacts with DSG1; there is evidence to suggest that the interaction promotes cell-cell adhesion of keratinocytes. As to expression, expressed in stratified epithelia only, such as the epidermis, tongue, esophagus and rumen (at protein level).

Its subcellular location is the cell membrane. The protein resides in the cell junction. It localises to the desmosome. The protein localises to the cytoplasm. In terms of biological role, a component of desmosome cell-cell junctions which are required for positive regulation of cellular adhesion. Required for cell-cell adhesion in the epidermis, as a result required for the maintenance of the dermal cohesion and the dermal barrier function. Required for cell-cell adhesion of epithelial cell layers surrounding the telogen hair club, as a result plays an important role in telogen hair shaft anchorage. Essential for successful completion of embryo compaction and embryo development. The polypeptide is Desmocollin-3 (DSC3) (Bos taurus (Bovine)).